The primary structure comprises 203 residues: ATP-dependent Clp protease proteolytic subunit 1 (203 aa).

The active-site Nucleophile is the serine 101. Histidine 126 is an active-site residue.

Belongs to the peptidase S14 family. As to quaternary structure, fourteen ClpP subunits assemble into 2 heptameric rings which stack back to back to give a disk-like structure with a central cavity, resembling the structure of eukaryotic proteasomes.

It is found in the cytoplasm. The enzyme catalyses Hydrolysis of proteins to small peptides in the presence of ATP and magnesium. alpha-casein is the usual test substrate. In the absence of ATP, only oligopeptides shorter than five residues are hydrolyzed (such as succinyl-Leu-Tyr-|-NHMec, and Leu-Tyr-Leu-|-Tyr-Trp, in which cleavage of the -Tyr-|-Leu- and -Tyr-|-Trp bonds also occurs).. Functionally, cleaves peptides in various proteins in a process that requires ATP hydrolysis. Has a chymotrypsin-like activity. Plays a major role in the degradation of misfolded proteins. In Synechococcus sp. (strain JA-3-3Ab) (Cyanobacteria bacterium Yellowstone A-Prime), this protein is ATP-dependent Clp protease proteolytic subunit 1.